The chain runs to 212 residues: Octanoyltransferase (212 aa).

Residues 30 to 205 (ETTVDELWCL…ELVEGLGHSQ (176 aa)) form the BPL/LPL catalytic domain. Substrate is bound by residues 69–76 (RGGQVTYH), 136–138 (SLG), and 149–151 (GLA). Cys-167 acts as the Acyl-thioester intermediate in catalysis.

This sequence belongs to the LipB family.

It localises to the cytoplasm. It catalyses the reaction octanoyl-[ACP] + L-lysyl-[protein] = N(6)-octanoyl-L-lysyl-[protein] + holo-[ACP] + H(+). It functions in the pathway protein modification; protein lipoylation via endogenous pathway; protein N(6)-(lipoyl)lysine from octanoyl-[acyl-carrier-protein]: step 1/2. Its function is as follows. Catalyzes the transfer of endogenously produced octanoic acid from octanoyl-acyl-carrier-protein onto the lipoyl domains of lipoate-dependent enzymes. Lipoyl-ACP can also act as a substrate although octanoyl-ACP is likely to be the physiological substrate. The chain is Octanoyltransferase from Marinobacter nauticus (strain ATCC 700491 / DSM 11845 / VT8) (Marinobacter aquaeolei).